Here is a 216-residue protein sequence, read N- to C-terminus: Probable GTP-binding protein EngB (216 aa).

Positions 26–200 constitute an EngB-type G domain; it reads EGIEIAFAGR…RAKLDTWFAP (175 aa). GTP contacts are provided by residues 34–41, 61–65, 79–82, 146–149, and 179–181; these read GRSNAGKS, GRTQL, DLPG, TKAD, and YSS. S41 and T63 together coordinate Mg(2+).

This sequence belongs to the TRAFAC class TrmE-Era-EngA-EngB-Septin-like GTPase superfamily. EngB GTPase family. The cofactor is Mg(2+).

In terms of biological role, necessary for normal cell division and for the maintenance of normal septation. The sequence is that of Probable GTP-binding protein EngB from Vibrio vulnificus (strain YJ016).